The chain runs to 191 residues: MNIYTSILVLSYLIGSIPFGLILSYIGGLGDIRKIGSGNIGATNVFRKSKKLAVVTLILDSLKGFVSVMLAKNFSSDQTFVFMSALFSIIGHMFPVWLSFKGGKGVATLLGSIMFIEYKFVIYFTIFWIIVFVIFRYSSLSSIISTISIMLLVYTHYSANESITFLVMSLLVIVQHIENIVRIIKGKENKI.

Transmembrane regions (helical) follow at residues 7–27, 51–71, 80–100, 115–135, 139–159, and 161–181; these read ILVL…SYIG, KLAV…VMLA, FVFM…WLSF, FIEY…FVIF, SLSS…HYSA, and ESIT…ENIV.

It belongs to the PlsY family. As to quaternary structure, probably interacts with PlsX.

It is found in the cell inner membrane. It carries out the reaction an acyl phosphate + sn-glycerol 3-phosphate = a 1-acyl-sn-glycero-3-phosphate + phosphate. It participates in lipid metabolism; phospholipid metabolism. In terms of biological role, catalyzes the transfer of an acyl group from acyl-phosphate (acyl-PO(4)) to glycerol-3-phosphate (G3P) to form lysophosphatidic acid (LPA). This enzyme utilizes acyl-phosphate as fatty acyl donor, but not acyl-CoA or acyl-ACP. The polypeptide is Glycerol-3-phosphate acyltransferase (Ehrlichia canis (strain Jake)).